Consider the following 443-residue polypeptide: Trigger factor (443 aa).

A PPIase FKBP-type domain is found at 161–246 (GDKVVIDFQG…IKKIMEGKLP (86 aa)).

The protein belongs to the FKBP-type PPIase family. Tig subfamily.

The protein resides in the cytoplasm. The catalysed reaction is [protein]-peptidylproline (omega=180) = [protein]-peptidylproline (omega=0). Its function is as follows. Involved in protein export. Acts as a chaperone by maintaining the newly synthesized protein in an open conformation. Functions as a peptidyl-prolyl cis-trans isomerase. This Legionella pneumophila subsp. pneumophila (strain Philadelphia 1 / ATCC 33152 / DSM 7513) protein is Trigger factor.